Reading from the N-terminus, the 510-residue chain is ATP synthase subunit alpha, chloroplastic (510 aa).

An ATP-binding site is contributed by G170 to T177.

Belongs to the ATPase alpha/beta chains family. In terms of assembly, F-type ATPases have 2 components, CF(1) - the catalytic core - and CF(0) - the membrane proton channel. CF(1) has five subunits: alpha(3), beta(3), gamma(1), delta(1), epsilon(1). CF(0) has four main subunits: a, b, b' and c.

It localises to the plastid. Its subcellular location is the chloroplast thylakoid membrane. It carries out the reaction ATP + H2O + 4 H(+)(in) = ADP + phosphate + 5 H(+)(out). Its function is as follows. Produces ATP from ADP in the presence of a proton gradient across the membrane. The alpha chain is a regulatory subunit. In Phaseolus vulgaris (Kidney bean), this protein is ATP synthase subunit alpha, chloroplastic.